The sequence spans 264 residues: Proteasome subunit alpha type-4 (264 aa).

The protein belongs to the peptidase T1A family. In terms of assembly, the 26S proteasome consists of a 20S proteasome core and two 19S regulatory subunits. The 20S proteasome core is composed of 28 subunits that are arranged in four stacked rings, resulting in a barrel-shaped structure. The two end rings are each formed by seven alpha subunits, and the two central rings are each formed by seven beta subunits. The catalytic chamber with the active sites is on the inside of the barrel. Interacts with PI31.

It localises to the cytoplasm. The protein localises to the nucleus. Its function is as follows. The proteasome is a multicatalytic proteinase complex which is characterized by its ability to cleave peptides with Arg, Phe, Tyr, Leu, and Glu adjacent to the leaving group at neutral or slightly basic pH. The proteasome has an ATP-dependent proteolytic activity. The chain is Proteasome subunit alpha type-4 (Prosalpha3) from Drosophila melanogaster (Fruit fly).